The primary structure comprises 61 residues: Large ribosomal subunit protein bL28 (61 aa).

This sequence belongs to the bacterial ribosomal protein bL28 family.

The protein is Large ribosomal subunit protein bL28 of Lachnospira eligens (strain ATCC 27750 / DSM 3376 / VPI C15-48 / C15-B4) (Eubacterium eligens).